A 584-amino-acid polypeptide reads, in one-letter code: MRRFGSKFASGLASRCALACPLASAATAPAGASTTSSTSSAQKSFFKTTEMIGYVHSIDGTIATLIPAPGNPGVAYNTIIQIQVSPTTFAAGLVFNLEKDGRIGIILMDNITEVQSGQKVMATGQLLHIPVGAGVLGKVVNPLGHEVPVGLVTRSRRLLDSTLGKVDTGAPNIVSRSPVNYNLLTGFKAVDTMIPIGRGQRELIVGDRQTGKTSIAVSTIINQVRINQQILSKNAVISIYVSIGQRCSNVARIHRLLQSYGALRYTTVMAATAAEPAGLQYLAPYAGVTMGEYFMNRGRHCLCVYDDLSKQAVAYRQISLLLRRPPGREAYPGDVFYLHSRLLERAAMLSPGKGGGSVTALPIVETLSNDVTAYIVTNVISITDGQIYLDTKLFTGGQRPAVNIGLSVSRVGSSAQNAAMKGVAGKLKGILAEYRKLAADSVGGQQVQTIPMIRGARFVALFNQKQPSYFMNAIVSLYACLNGYLDDVKVQYVKFYEYLLVHRDLGIMYGTAKNKFFYMYVQELNYLIRFFTLNSPILHGELEEMLKQHTHLFLQHYQSKMNAIKSEKDVKALKNLLYSCKRAV.

A mitochondrion-targeting transit peptide spans 1 to 24 (MRRFGSKFASGLASRCALACPLAS). ATP is bound by residues 207–214 (DRQTGKTS) and Q464.

The protein belongs to the ATPase alpha/beta chains family. As to quaternary structure, F-type ATPases have 2 components, F(1) - the catalytic core - and F(o) - the membrane proton channel. F(1) has five subunits: alpha(3), beta(3), gamma(1), delta(1), epsilon(1), plus the additional subunit P18 (Tb427.05.1710) that is not present in F(1)F(o) ATP synthase from metazoa. Subunit P18 (Tb927.5.1710) interacts with the alpha subunit with a 1:1 stoichiometry; the interaction is direct. Subunit gamma is part of the central stalk. F(o) has three main subunits: a, b and c. The trypanosomal ATPase complex contains additional subunits that are not present in the F(1)F(o) ATP synthase from metazoa.

The protein localises to the mitochondrion. Its subcellular location is the mitochondrion inner membrane. Its function is as follows. Mitochondrial membrane ATP synthase (F(1)F(o) ATP synthase) produces ATP from ADP in the presence of a proton gradient across the membrane which is generated by electron transport complexes of the respiratory chain. F-type ATPases consist of two structural domains, F(1) - containing the extramembraneous catalytic core, and F(o) - containing the membrane proton channel, linked together by a central stalk and a peripheral stalk. During catalysis, ATP synthesis in the catalytic domain of F(1) is coupled via a rotary mechanism of the central stalk subunits to proton translocation. Subunits alpha and beta form the catalytic core in F(1). Rotation of the central stalk against the surrounding alpha(3)beta(3) subunits leads to hydrolysis of ATP in three separate catalytic sites on the beta subunits. Subunit alpha does not bear the catalytic high-affinity ATP-binding sites. Contrary to the procyclic, insect form that requires F(1)F(o) ATP synthase for ATP synthesis, the bloodstream form relies on ATP hydrolysis by F(1)F(o) ATP synthase to maintain its mitochondrial membrane potential. This chain is ATP synthase subunit alpha, mitochondrial, found in Trypanosoma brucei brucei.